The primary structure comprises 377 residues: 2-aminoethylphosphonate--pyruvate transaminase (377 aa).

N6-(pyridoxal phosphate)lysine is present on K194.

The protein belongs to the class-V pyridoxal-phosphate-dependent aminotransferase family. PhnW subfamily. Homodimer. Pyridoxal 5'-phosphate serves as cofactor.

It carries out the reaction (2-aminoethyl)phosphonate + pyruvate = phosphonoacetaldehyde + L-alanine. Involved in phosphonate degradation. This chain is 2-aminoethylphosphonate--pyruvate transaminase, found in Cupriavidus necator (strain ATCC 17699 / DSM 428 / KCTC 22496 / NCIMB 10442 / H16 / Stanier 337) (Ralstonia eutropha).